The primary structure comprises 456 residues: MYVEDTIAAISTAAGEGGVGIVRVSGPDAPSIARRVFRRGSNGDFESHRFYYGSVVDAVTGEAVDEAMAVLMVRPRSYTREDVLEIQCHGGYLVTRRVLELVLAAGARLAEPGEFTRRAFLNGRIDLVQAEAVIDVIRAKTDAALALAQHQRQGRLSQRLDTVMAELRQALALVEAFIDFPEDDIDPAAQDALTVHVRKAAETVGELIAGFDEGRVLREGVAVLIAGKPNVGKSSLLNTLLQEKRAIVTSVPGTTRDIIEEVVNIRGLPLRMIDTAGIRDTEDIVEKEGVRLTLEKIPEADLVLLVIDGSRPLDEDDRMILSALAGKRLILVENKCDLPRAVQIPDELVLMPRVTVSTSRGDGIDELKESIFQTFIHGAAIDSREYVAVSRVRHRDLLSRSTMHLTAFEQGLASGFTLELLAVELRDALAAVGEVTGETTPDDILDVIFDRFCIGK.

(6S)-5-formyl-5,6,7,8-tetrahydrofolate is bound by residues Arg23, Glu85, and Arg124. The TrmE-type G domain maps to Gly220 to Ile376. Asn230 contributes to the K(+) binding site. Residues Asn230 to Ser235, Thr249 to Thr255, and Asp274 to Gly277 each bind GTP. Ser234 is a binding site for Mg(2+). Positions 249, 251, and 254 each coordinate K(+). Thr255 is a Mg(2+) binding site. Residue Lys456 participates in (6S)-5-formyl-5,6,7,8-tetrahydrofolate binding.

It belongs to the TRAFAC class TrmE-Era-EngA-EngB-Septin-like GTPase superfamily. TrmE GTPase family. Homodimer. Heterotetramer of two MnmE and two MnmG subunits. K(+) is required as a cofactor.

The protein resides in the cytoplasm. Functionally, exhibits a very high intrinsic GTPase hydrolysis rate. Involved in the addition of a carboxymethylaminomethyl (cmnm) group at the wobble position (U34) of certain tRNAs, forming tRNA-cmnm(5)s(2)U34. The protein is tRNA modification GTPase MnmE of Geobacter sulfurreducens (strain ATCC 51573 / DSM 12127 / PCA).